We begin with the raw amino-acid sequence, 788 residues long: Cell division cycle protein 27 homolog (788 aa).

The tract at residues 198-436 is disordered; sequence YLDSPASSLK…PLPSVASSLN (239 aa). The span at 217-229 shows a compositional bias: low complexity; the sequence is GPSSSSAASTAEP. 3 stretches are compositionally biased toward polar residues: residues 241–273, 293–303, and 319–360; these read RGTI…SRIN, SSVTGSRSSLF, and NRAN…NPVR. Residues 366 to 378 are compositionally biased toward low complexity; the sequence is ADAAAAANKTAKT. Residues 391–414 show a composition bias toward polar residues; that stretch reads VSRNSNLARSLSGSTNSVASTASE. TPR repeat units lie at residues 561-594, 596-628, 629-662, 664-696, and 731-764; these read PQSW…DKRF, YAYT…SPRD, YRAW…NPTN, AMLC…NPLD, and AFIF…DPRG.

Belongs to the APC3/CDC27 family. As to quaternary structure, the APC/C complex is probably composed of at least 12 subunits: apc-2, apc-10, apc-11, cdc-26, emb-1, emb-27, emb-30, mat-1, mat-2, mat-3, such-1 and gfi-3. In terms of tissue distribution, expressed in the ventral nerve cord.

It is found in the nucleus. Its pathway is protein modification; protein ubiquitination. Functionally, probable component of the anaphase promoting complex/cyclosome (APC/C), a cell cycle-regulated E3 ubiquitin ligase that controls progression through mitosis and the G1 phase of the cell cycle. The APC/C complex acts by mediating ubiquitination and subsequent degradation of target proteins. Developmental role in early embryogenesis and the metaphase to anaphase transition in oocyte and spermatocyte meiosis and mitosis in germ cells. Required for embryonic anterior-posterior axis formation. Plays a role in regulating the abundance of glr-1 receptors in postmitotic neurons, which may in turn control animal locomotion. This is Cell division cycle protein 27 homolog from Caenorhabditis elegans.